The primary structure comprises 378 residues: Sterol 24-C-methyltransferase erg6 (378 aa).

It belongs to the class I-like SAM-binding methyltransferase superfamily. Erg6/SMT family.

The protein localises to the nucleus. Its subcellular location is the endoplasmic reticulum. The catalysed reaction is zymosterol + S-adenosyl-L-methionine = fecosterol + S-adenosyl-L-homocysteine + H(+). It carries out the reaction lanosterol + S-adenosyl-L-methionine = eburicol + S-adenosyl-L-homocysteine + H(+). It functions in the pathway steroid metabolism; ergosterol biosynthesis. Its function is as follows. Sterol 24-C-methyltransferase; part of the third module of ergosterol biosynthesis pathway that includes by the late steps of the pathway. Erg6 catalyzes the methyl transfer from S-adenosyl-methionine to the C-24 of zymosterol to form fecosterol. The third module or late pathway involves the ergosterol synthesis itself through consecutive reactions that mainly occur in the endoplasmic reticulum (ER) membrane. Firstly, the squalene synthase erg9 catalyzes the condensation of 2 farnesyl pyrophosphate moieties to form squalene, which is the precursor of all steroids. Secondly, squalene is converted into lanosterol by the consecutive action of the squalene epoxidase erg1 and the lanosterol synthase erg7. The lanosterol 14-alpha-demethylase erg11/cyp1 catalyzes C14-demethylation of lanosterol to produce 4,4'-dimethyl cholesta-8,14,24-triene-3-beta-ol. In the next steps, a complex process involving various demethylation, reduction and desaturation reactions catalyzed by the C-14 reductase erg24 and the C-4 demethylation complex erg25-erg26-erg27 leads to the production of zymosterol. Erg28 likely functions in the C-4 demethylation complex reaction by tethering erg26 and Erg27 to the endoplasmic reticulum or to facilitate interaction between these proteins. Then, the sterol 24-C-methyltransferase erg6 catalyzes the methyl transfer from S-adenosyl-methionine to the C-24 of zymosterol to form fecosterol. The C-8 sterol isomerase erg2 catalyzes the reaction which results in unsaturation at C-7 in the B ring of sterols and thus converts fecosterol to episterol. The sterol-C5-desaturases erg31 and erg32 then catalyze the introduction of a C-5 double bond in the B ring to produce 5-dehydroepisterol. The C-22 sterol desaturase erg5 further converts 5-dehydroepisterol into ergosta-5,7,22,24(28)-tetraen-3beta-ol by forming the C-22(23) double bond in the sterol side chain. Finally, ergosta-5,7,22,24(28)-tetraen-3beta-ol is substrate of the C-24(28) sterol reductase erg4 to produce ergosterol. In the genus Schizosaccharomyces, a second route exists between lanosterol and fecosterol, via the methylation of lanosterol to eburicol by erg6, followed by C14-demethylation by erg11/cyp1 and C4-demethylation by the demethylation complex erg25-erg26-erg27. The chain is Sterol 24-C-methyltransferase erg6 from Schizosaccharomyces pombe (strain 972 / ATCC 24843) (Fission yeast).